Here is a 348-residue protein sequence, read N- to C-terminus: MSTEKKTVAIVGGSGYAGGEFLRLALGHPHLEVTQVTSERSAKLPVSMVHPNLRGATNLKFRKAAELEEADIIVLALPHNSAAKRITEFEAKGKVIVDLSADFRLKDPEVYERFYGEPHPAPEQLGQWVYGNPELHREDLRGATRIACAGCFATSVILALYPLLRLGALAPKDIIATGLVGSSAAGASASESSHHPERAGSLRVYKPVGHRHTAEAQQELPGKFPLHLTAISTPRVRGILTTIQAWVPDGWSDKDVWSAYREVYGQEPFIRIVKVAKGIHRYPDPMLLDGTNFCDIGFEMDVDTGRVVLMSAIDNLVKGTAGHAIQSLNVAQGWDERAGLGFLGLHPT.

14–17 (SGYA) contacts NADP(+). C151 is a catalytic residue. N315 contacts NADP(+).

The protein belongs to the NAGSA dehydrogenase family. Type 1 subfamily. LysY sub-subfamily.

It localises to the cytoplasm. It catalyses the reaction [amino-group carrier protein]-C-terminal-N-(1-carboxy-5-oxopentan-1-yl)-L-glutamine + phosphate + NADP(+) = [amino-group carrier protein]-C-terminal-N-(1-carboxy-5-phosphooxy-5-oxopentan-1-yl)-L-glutamine + NADPH + H(+). It participates in amino-acid biosynthesis; L-lysine biosynthesis via AAA pathway; L-lysine from L-alpha-aminoadipate (Thermus route): step 3/5. Catalyzes the NADPH-dependent reduction of [LysW]-aminoadipate 6-phosphate to yield [LysW]-aminoadipate 6-semialdehyde. The protein is [LysW]-L-2-aminoadipate 6-phosphate reductase of Deinococcus radiodurans (strain ATCC 13939 / DSM 20539 / JCM 16871 / CCUG 27074 / LMG 4051 / NBRC 15346 / NCIMB 9279 / VKM B-1422 / R1).